The chain runs to 1112 residues: Lacto-N-biosidase (1112 aa).

A signal peptide spans 1 to 34; it reads MEKSSNRRFGVRTVAAIVAGLMVGGMCTAMTASA. C187 and C189 are disulfide-bonded. Beta-D-galactosyl-(1-&gt;3)-N-acetyl-D-glucosamine is bound by residues Q190, E216, N259, D320, E321, Y419, and D467. E321 (proton donor/acceptor) is an active-site residue. A disulfide bridge connects residues C564 and C589. Residues 938-969 are disordered; sequence ATPVELTEPEQPKDNPEVTETPEATGVTVSGD. One can recognise a BIG2 domain in the interval 975-1041; the sequence is ALSLKKGTTA…ANGKSASVTV (67 aa). Positions 1044-1061 are enriched in low complexity; the sequence is TEDSEVPGPTGPTEPTKP. The segment at 1044-1081 is disordered; that stretch reads TEDSEVPGPTGPTEPTKPGTEKPTTKPTTKPNDGKLSA. A helical transmembrane segment spans residues 1086 to 1106; that stretch reads TAVLATIAALFALAGGAVVAV.

It belongs to the glycosyl hydrolase 20 family.

It localises to the cell membrane. The catalysed reaction is beta-D-Gal-(1-&gt;3)-beta-D-GlcNAc-(1-&gt;3)-beta-D-Gal-(1-&gt;4)-D-Glc + H2O = beta-D-galactosyl-(1-&gt;3)-N-acetyl-D-glucosamine + lactose. Functionally, present in the infant gut, this enzyme is involved in the assimilation of type-1 human milk oligosaccharides (HMOs). It hydrolyzes via a retaining mechanism the beta-D-GlcNAc-(1-&gt;3)-beta-D-Gal linkage in lacto-N-tetraose (LNT or beta-D-Gal-(1-&gt;3)-beta-D-GlcNAc-(1-&gt;3)-beta-D-Gal-(1-&gt;4)-D-Glc), an abundant HMO unique to human breast milk, releasing lacto-N-biose (LNB or beta-D-Gal-(1-&gt;3)-D-GlcNAc) and lactose. Is a key enzymatic factor for growth and proliferation of B.bifidum in the gut ecosystem of breast-fed infants. Has substrate preference for unmodified beta-linked LNB since it does not hydrolyze the fucosylated forms of lacto-N-tetraose (lacto-N-fucopentaose I and II) or lacto-N-neotetraose. Is also able to display transglycosylation activity in vitro. This is Lacto-N-biosidase from Bifidobacterium bifidum (strain DSM 20082 / JCM 1254 / BCRC 11844 / KCTC 3440 / E319f (Variant a)).